The following is a 662-amino-acid chain: Leucine aminopeptidase 2 (662 aa).

A peptide is bound by residues 178-180 (QLE) and 304-309 (PYGGME). Position 333 (His-333) interacts with Zn(2+). The active-site Proton acceptor is Glu-334. Residues His-337 and Glu-356 each coordinate Zn(2+). Tyr-422 acts as the Proton donor in catalysis.

The protein belongs to the peptidase M1 family. The cofactor is Zn(2+).

It is found in the cytoplasm. Its subcellular location is the nucleus. The catalysed reaction is an epoxide + H2O = an ethanediol. Aminopeptidase that preferentially cleaves di- and tripeptides. Also has low epoxide hydrolase activity (in vitro). Can hydrolyze the epoxide leukotriene LTA(4) but it forms preferentially 5,6-dihydroxy-7,9,11,14-eicosatetraenoic acid rather than the cytokine leukotriene B(4) as the product compared to the homologous mammalian enzyme (in vitro). The protein is Leucine aminopeptidase 2 of Kluyveromyces lactis (strain ATCC 8585 / CBS 2359 / DSM 70799 / NBRC 1267 / NRRL Y-1140 / WM37) (Yeast).